The primary structure comprises 186 residues: Dihydrofolate reductase (186 aa).

A DHFR domain is found at 3-183; the sequence is KFSLIVAVCA…IQYQYRIYEK (181 aa). NADP(+) is bound by residues Ala-9 and 15–21; that span reads GIGIKGD. Substrate is bound at residue 29 to 34; it reads ELKYFS. 53–55 contributes to the NADP(+) binding site; that stretch reads RKT. A substrate-binding site is contributed by Arg-69. NADP(+) is bound by residues 75–77 and 116–123; these read TRD and GGNAVYKE.

This sequence belongs to the dihydrofolate reductase family.

The enzyme catalyses (6S)-5,6,7,8-tetrahydrofolate + NADP(+) = 7,8-dihydrofolate + NADPH + H(+). Its pathway is cofactor biosynthesis; tetrahydrofolate biosynthesis; 5,6,7,8-tetrahydrofolate from 7,8-dihydrofolate: step 1/1. Functionally, key enzyme in folate metabolism. Catalyzes an essential reaction for de novo glycine and purine synthesis, and for DNA precursor synthesis. In Aedes albopictus (Asian tiger mosquito), this protein is Dihydrofolate reductase (DHFR).